We begin with the raw amino-acid sequence, 208 residues long: Virion protein US10 homolog (208 aa).

The segment at 17–61 (ARGAKLSPGQHPRPSHAVRGRTAPGTRSSRRRTCEDGTSGPRDPR) is disordered. Residues 167–179 (CAFWCCLAHAATC) fold into a zinc finger.

The protein belongs to the herpesviridae US10 family. Post-translationally, phosphorylated.

The protein resides in the virion tegument. It is found in the host nucleus matrix. This chain is Virion protein US10 homolog, found in Homo sapiens (Human).